Consider the following 312-residue polypeptide: Methionyl-tRNA formyltransferase (312 aa).

Residue 110 to 113 (SLLP) coordinates (6S)-5,6,7,8-tetrahydrofolate.

The protein belongs to the Fmt family.

It catalyses the reaction L-methionyl-tRNA(fMet) + (6R)-10-formyltetrahydrofolate = N-formyl-L-methionyl-tRNA(fMet) + (6S)-5,6,7,8-tetrahydrofolate + H(+). Its function is as follows. Attaches a formyl group to the free amino group of methionyl-tRNA(fMet). The formyl group appears to play a dual role in the initiator identity of N-formylmethionyl-tRNA by promoting its recognition by IF2 and preventing the misappropriation of this tRNA by the elongation apparatus. This chain is Methionyl-tRNA formyltransferase, found in Streptococcus suis (strain 05ZYH33).